A 205-amino-acid chain; its full sequence is Regulatory protein RecX (205 aa).

Belongs to the RecX family.

It localises to the cytoplasm. Functionally, modulates RecA activity. In Finegoldia magna (strain ATCC 29328 / DSM 20472 / WAL 2508) (Peptostreptococcus magnus), this protein is Regulatory protein RecX.